Consider the following 683-residue polypeptide: Transforming growth factor-beta-induced protein ig-h3 (683 aa).

Residues 1 to 23 (MALLGRLLPLALALALGPAATHA) form the signal peptide. Serine 37 is subject to Phosphoserine. Residues 45–99 (GPNVCAVQKLIGTNKKYFTNCKQWYQRKICGKSTVISYECCPGYEKVPGEKGCPA) enclose the EMI domain. 5 disulfides stabilise this stretch: cysteine 49-cysteine 85, cysteine 74-cysteine 339, cysteine 84-cysteine 97, cysteine 214-cysteine 317, and cysteine 473-cysteine 478. Cysteine 65 bears the S-cysteinyl cysteine mark. 4 FAS1 domains span residues 103–236 (LSNL…DKVI), 240–371 (TNNI…DELL), 375–498 (SAKT…DRML), and 502–632 (MGTV…NTVL). Positions 642-644 (RGD) match the Cell attachment site motif.

In terms of assembly, binds to type I, II, and IV collagens. In terms of processing, gamma-carboxyglutamated; gamma-carboxyglutamate residues are formed by vitamin K dependent carboxylation; these residues may be required for binding to calcium. According to a report, does not contain any vitamin K-dependent gamma-carboxyglutamate residues. The EMI domain contains 2 expected intradomain disulfide bridges (Cys-49-Cys85 and Cys-84-Cys-97) and one unusual interdomain disulfide bridge to the second FAS1 domain (Cys-74-Cys-339). This arrangement violates the predicted disulfide bridge pattern of an EMI domain. As to expression, widely distributed in various tissues except for the brain. High levels in corneal epithelium.

It is found in the secreted. The protein resides in the extracellular space. Its subcellular location is the extracellular matrix. Its function is as follows. Plays a role in cell adhesion. May play a role in cell-collagen interactions. This chain is Transforming growth factor-beta-induced protein ig-h3 (TGFBI), found in Sus scrofa (Pig).